The following is a 307-amino-acid chain: 4-hydroxy-3-methylbut-2-enyl diphosphate reductase (307 aa).

Cysteine 13 contacts [4Fe-4S] cluster. (2E)-4-hydroxy-3-methylbut-2-enyl diphosphate contacts are provided by histidine 42 and histidine 75. Dimethylallyl diphosphate-binding residues include histidine 42 and histidine 75. Residues histidine 42 and histidine 75 each coordinate isopentenyl diphosphate. Cysteine 97 is a binding site for [4Fe-4S] cluster. Residue histidine 125 coordinates (2E)-4-hydroxy-3-methylbut-2-enyl diphosphate. Histidine 125 contacts dimethylallyl diphosphate. An isopentenyl diphosphate-binding site is contributed by histidine 125. Catalysis depends on glutamate 127, which acts as the Proton donor. Threonine 165 serves as a coordination point for (2E)-4-hydroxy-3-methylbut-2-enyl diphosphate. A [4Fe-4S] cluster-binding site is contributed by cysteine 195. Positions 223, 224, 225, and 267 each coordinate (2E)-4-hydroxy-3-methylbut-2-enyl diphosphate. Serine 223, serine 224, asparagine 225, and serine 267 together coordinate dimethylallyl diphosphate. Serine 223, serine 224, asparagine 225, and serine 267 together coordinate isopentenyl diphosphate.

It belongs to the IspH family. [4Fe-4S] cluster is required as a cofactor.

It catalyses the reaction isopentenyl diphosphate + 2 oxidized [2Fe-2S]-[ferredoxin] + H2O = (2E)-4-hydroxy-3-methylbut-2-enyl diphosphate + 2 reduced [2Fe-2S]-[ferredoxin] + 2 H(+). It carries out the reaction dimethylallyl diphosphate + 2 oxidized [2Fe-2S]-[ferredoxin] + H2O = (2E)-4-hydroxy-3-methylbut-2-enyl diphosphate + 2 reduced [2Fe-2S]-[ferredoxin] + 2 H(+). It functions in the pathway isoprenoid biosynthesis; dimethylallyl diphosphate biosynthesis; dimethylallyl diphosphate from (2E)-4-hydroxy-3-methylbutenyl diphosphate: step 1/1. The protein operates within isoprenoid biosynthesis; isopentenyl diphosphate biosynthesis via DXP pathway; isopentenyl diphosphate from 1-deoxy-D-xylulose 5-phosphate: step 6/6. Its function is as follows. Catalyzes the conversion of 1-hydroxy-2-methyl-2-(E)-butenyl 4-diphosphate (HMBPP) into a mixture of isopentenyl diphosphate (IPP) and dimethylallyl diphosphate (DMAPP). Acts in the terminal step of the DOXP/MEP pathway for isoprenoid precursor biosynthesis. This Chlamydia trachomatis serovar L2 (strain ATCC VR-902B / DSM 19102 / 434/Bu) protein is 4-hydroxy-3-methylbut-2-enyl diphosphate reductase.